A 404-amino-acid polypeptide reads, in one-letter code: Sorting nexin-32 (404 aa).

Over residues Met1–Asn10 the composition is skewed to basic and acidic residues. Residues Met1–Val29 form a disordered region. The span at Glu11–Asp20 shows a compositional bias: polar residues. The PX domain maps to Leu21–Leu168. The stretch at Thr255–Arg336 forms a coiled coil.

Belongs to the sorting nexin family.

Functionally, may be involved in several stages of intracellular trafficking. This chain is Sorting nexin-32 (Snx32), found in Mus musculus (Mouse).